The chain runs to 224 residues: MTEKSICPSRDNGVVIPDNWTGYDLDVFSLPNHYCEDLECVFIPHGVIVDRTERIANDIMRDIGDNHITVLCVLKGGYRFCTDLVEHIKNLSRNSERFISMRVDFIRLKCYCNDQCMDELQILGGEDLAKLSGKNVLIVEDIINTGRTMTALLSQLEKYKPKMVKVASLLVKRSASSNQYRPDYTGFEIPNKFVVGYALDYNEYFRDLHHICVINEKGKNKYKV.

Mg(2+) is bound by residues glutamate 140 and aspartate 141. GMP contacts are provided by residues 140–148 (EDIINTGRT), lysine 172, 193–194 (FV), and aspartate 200. Aspartate 200 contributes to the Mg(2+) binding site.

This sequence belongs to the purine/pyrimidine phosphoribosyltransferase family.

The polypeptide is Phosphoribosyltransferase domain-containing protein 1 (prtfdc1) (Xenopus tropicalis (Western clawed frog)).